Here is a 421-residue protein sequence, read N- to C-terminus: 3-phosphoshikimate 1-carboxyvinyltransferase (421 aa).

Positions 21, 22, and 26 each coordinate 3-phosphoshikimate. A phosphoenolpyruvate-binding site is contributed by lysine 21. Positions 93 and 121 each coordinate phosphoenolpyruvate. 3-phosphoshikimate-binding residues include serine 166, serine 167, glutamine 168, serine 194, aspartate 310, and lysine 337. Glutamine 168 lines the phosphoenolpyruvate pocket. The active-site Proton acceptor is aspartate 310. Phosphoenolpyruvate is bound by residues arginine 341, arginine 382, and lysine 407.

This sequence belongs to the EPSP synthase family. As to quaternary structure, monomer.

The protein resides in the cytoplasm. The enzyme catalyses 3-phosphoshikimate + phosphoenolpyruvate = 5-O-(1-carboxyvinyl)-3-phosphoshikimate + phosphate. It functions in the pathway metabolic intermediate biosynthesis; chorismate biosynthesis. Its function is as follows. Catalyzes the transfer of the enolpyruvyl moiety of phosphoenolpyruvate (PEP) to the 5-hydroxyl of shikimate-3-phosphate (S3P) to produce enolpyruvyl shikimate-3-phosphate and inorganic phosphate. This is 3-phosphoshikimate 1-carboxyvinyltransferase from Methanoregula boonei (strain DSM 21154 / JCM 14090 / 6A8).